We begin with the raw amino-acid sequence, 1050 residues long: MDS1 and EVI1 complex locus protein EVI1-B (1050 aa).

C2H2-type zinc fingers lie at residues 21 to 48 (YHCEECDQLFESKTELSNHQKYSCGTPH), 75 to 97 (HECKECDQVFPDMQSLEKHLLSH), and 103 to 125 (YKCDQCPKAFNWKSNLIRHQMSH). The segment at 131–155 (YECENCSKQVFTDPSNLQRHIRSQH) adopts a C2H2-type 4; degenerate zinc-finger fold. C2H2-type zinc fingers lie at residues 161 to 183 (HACSECGKTFATSSGLKQHKHIH) and 189 to 211 (FVCEVCHKSYTQFSNLCRHKRMH). The C2H2-type 7; atypical zinc-finger motif lies at 218-240 (IKCKDCGQMFSTTSSLNKHRRFC). Disordered stretches follow at residues 371–421 (ITEN…SDKD) and 529–612 (PLKV…EKKD). The segment covering 379 to 390 (RPHEKVSDHSES) has biased composition (basic and acidic residues). Residues 397–411 (STPSGSDLETTSGSD) are compositionally biased toward polar residues. The Nuclear localization signal signature appears at 420-433 (KDKLKENGKLYKDK). Basic and acidic residues predominate over residues 529–542 (PLKVEPESPKESKK). A CTBP-binding motif 1 motif is present at residues 551–555 (AFDLT). Over residues 564-576 (SPNAPSKSSAPTS) the composition is skewed to low complexity. The short motif at 582–586 (PLDLS) is the CTBP-binding motif 2 element. Positions 588–598 (GSRSRATTTKQ) are enriched in polar residues. The segment covering 599–612 (TESRKNHIFGEKKD) has biased composition (basic and acidic residues). 3 C2H2-type zinc fingers span residues 731–753 (YTCRYCGKIFPRSANLTRHLRTH), 759–782 (YRCKYCDRSFSISSNLQRHIRNIH), and 788–810 (FKCHLCDRCFGQQTNLDRHLKKH). The segment at 928–951 (KSEVNCKVSPSRHDDDDDDEEEDF) is disordered.

As to quaternary structure, homooligomer. Interacts with ctbp.

Its subcellular location is the nucleus. It localises to the nucleus speckle. Functionally, transcriptional repressor during pronephros development. Plays a role in regionalization of the pronephros; may promote formation of the distal tubule and duct over formation of the glomus and proximal tubule. The polypeptide is MDS1 and EVI1 complex locus protein EVI1-B (mecom-b) (Xenopus laevis (African clawed frog)).